Consider the following 389-residue polypeptide: Lipid-A-disaccharide synthase (389 aa).

It belongs to the LpxB family.

It carries out the reaction a lipid X + a UDP-2-N,3-O-bis[(3R)-3-hydroxyacyl]-alpha-D-glucosamine = a lipid A disaccharide + UDP + H(+). The protein operates within bacterial outer membrane biogenesis; LPS lipid A biosynthesis. Functionally, condensation of UDP-2,3-diacylglucosamine and 2,3-diacylglucosamine-1-phosphate to form lipid A disaccharide, a precursor of lipid A, a phosphorylated glycolipid that anchors the lipopolysaccharide to the outer membrane of the cell. This chain is Lipid-A-disaccharide synthase, found in Paraburkholderia xenovorans (strain LB400).